The sequence spans 522 residues: Probable mannosyltransferase KTR5 (522 aa).

Over 1 to 16 (MLLIRRTINAFLGCIH) the chain is Cytoplasmic. A helical; Signal-anchor for type II membrane protein transmembrane segment spans residues 17–37 (CNLTATCILIAFVITMYVVLV). The interval 38 to 82 (SEPASVDGTMGNFLPFSKMDLATKRDRPFYSNCVNTQDYLLNPSY) is stem region. Residues 38 to 522 (SEPASVDGTM…REDYLRQFGN (485 aa)) are Lumenal-facing. The interval 83–522 (IKQNASFVML…REDYLRQFGN (440 aa)) is catalytic. Asn-86 carries N-linked (GlcNAc...) asparagine glycosylation. The active-site Nucleophile is Glu-363.

This sequence belongs to the glycosyltransferase 15 family.

The protein localises to the membrane. In terms of biological role, possible glycosyltransferase that transfers an alpha-D-mannosyl residue from GDP-mannose into lipid-linked oligosaccharide, forming an alpha-(1-&gt;2)-D-mannosyl-D-mannose linkage. The protein is Probable mannosyltransferase KTR5 (KTR5) of Saccharomyces cerevisiae (strain ATCC 204508 / S288c) (Baker's yeast).